A 76-amino-acid chain; its full sequence is RNA-binding protein KhpA (76 aa).

The region spanning 29–76 (QNIIELRVSPKDVGKVIGKNGRIAKSLRAILTAASVKAGKNFSLEIID) is the KH domain.

This sequence belongs to the KhpA RNA-binding protein family. As to quaternary structure, forms a complex with KhpB.

The protein resides in the cytoplasm. A probable RNA chaperone. Forms a complex with KhpB which binds to cellular RNA and controls its expression. Plays a role in peptidoglycan (PG) homeostasis and cell length regulation. This chain is RNA-binding protein KhpA, found in Leptospira interrogans serogroup Icterohaemorrhagiae serovar copenhageni (strain Fiocruz L1-130).